Here is a 245-residue protein sequence, read N- to C-terminus: tRNA pseudouridine synthase A 1 (245 aa).

D53 functions as the Nucleophile in the catalytic mechanism. Position 111 (Y111) interacts with substrate.

This sequence belongs to the tRNA pseudouridine synthase TruA family. In terms of assembly, homodimer.

The catalysed reaction is uridine(38/39/40) in tRNA = pseudouridine(38/39/40) in tRNA. Functionally, formation of pseudouridine at positions 38, 39 and 40 in the anticodon stem and loop of transfer RNAs. In Clostridium tetani (strain Massachusetts / E88), this protein is tRNA pseudouridine synthase A 1.